Reading from the N-terminus, the 252-residue chain is Type II secretion system protein N (252 aa).

Residues 1–4 (MKQK) are Cytoplasmic-facing. Residues 5–25 (VLIAALFLVAYLGFLLVKLPA) traverse the membrane as a helical segment. Topologically, residues 26 to 252 (TLVVRHLPLP…RFPLRYQGRI (227 aa)) are periplasmic.

The protein belongs to the GSP N family.

It localises to the cell inner membrane. Functionally, involved in a type II secretion system (T2SS, formerly general secretion pathway, GSP) for the export of proteins. The sequence is that of Type II secretion system protein N (exeN) from Aeromonas hydrophila.